We begin with the raw amino-acid sequence, 257 residues long: Neurotrophin-3 (257 aa).

An N-terminal signal peptide occupies residues 1–18 (MSILFYVIFLAYLRGIQG). Residues 19-138 (NNMDQRSLPE…VANRTSRRKR (120 aa)) constitute a propeptide that is removed on maturation. The tract at residues 61–81 (STLPKAEAPREPERGGPAKSA) is disordered. Positions 67 to 76 (EAPREPERGG) are enriched in basic and acidic residues. N-linked (GlcNAc...) asparagine glycosylation occurs at asparagine 131. 3 disulfides stabilise this stretch: cysteine 152-cysteine 217, cysteine 195-cysteine 246, and cysteine 205-cysteine 248.

This sequence belongs to the NGF-beta family. Brain and peripheral tissues.

Its subcellular location is the secreted. Seems to promote the survival of visceral and proprioceptive sensory neurons. This Homo sapiens (Human) protein is Neurotrophin-3 (NTF3).